Consider the following 342-residue polypeptide: Oxygen-dependent coproporphyrinogen-III oxidase (342 aa).

Ser-98 serves as a coordination point for substrate. Positions 102 and 112 each coordinate a divalent metal cation. The active-site Proton donor is the His-112. 114-116 (NYR) contacts substrate. 2 residues coordinate a divalent metal cation: His-146 and His-176. Residues 266–301 (YVEFNLVWDRGTIFGLQTNGRTESILMSLPPLARWE) are important for dimerization.

Belongs to the aerobic coproporphyrinogen-III oxidase family. In terms of assembly, homodimer. A divalent metal cation is required as a cofactor.

It localises to the cytoplasm. The enzyme catalyses coproporphyrinogen III + O2 + 2 H(+) = protoporphyrinogen IX + 2 CO2 + 2 H2O. The protein operates within porphyrin-containing compound metabolism; protoporphyrin-IX biosynthesis; protoporphyrinogen-IX from coproporphyrinogen-III (O2 route): step 1/1. In terms of biological role, involved in the heme and chlorophyll biosynthesis. Catalyzes the aerobic oxidative decarboxylation of propionate groups of rings A and B of coproporphyrinogen-III to yield the vinyl groups in protoporphyrinogen-IX. The chain is Oxygen-dependent coproporphyrinogen-III oxidase from Prochlorococcus marinus (strain MIT 9312).